A 221-amino-acid chain; its full sequence is MCPLRSLLLISTLVLLHHLPHLSLGRSLPTTTASPGRSCLDYSQNLLRAVSNTLQKARQTLEFYSCTSEEIDHEDITKDKTSTVEACLPLELATNESCLASRETSFITNGHCLASGKTSFMTTLCLRSIYEDLKMYHVEFQAMNAKLLMDPKRQIFLDQNMLAAIAELMQALNFDSETVPQKPSLKELDFYKTKVKLCILLHAFRIRAVTIDRMMSYLSSS.

A signal peptide spans 1–25 (MCPLRSLLLISTLVLLHHLPHLSLG). 3 disulfides stabilise this stretch: Cys39–Cys112, Cys66–Cys198, and Cys87–Cys125. The N-linked (GlcNAc...) asparagine glycan is linked to Asn95.

It belongs to the IL-6 superfamily. As to quaternary structure, heterodimer with IL12B; disulfide-linked. This heterodimer is known as interleukin IL-12. Heterodimer with EBI3/IL27B; not disulfide-linked. This heterodimer is known as interleukin IL-35. Interacts with NBR1; this interaction promotes IL-12 secretion.

It localises to the secreted. Its function is as follows. Heterodimerizes with IL12B to form the IL-12 cytokine or with EBI3/IL27B to form the IL-35 cytokine. IL-12 is primarily produced by professional antigen-presenting cells (APCs) such as B-cells and dendritic cells (DCs) as well as macrophages and granulocytes and regulates T-cell and natural killer-cell responses, induces the production of interferon-gamma (IFN-gamma), favors the differentiation of T-helper 1 (Th1) cells and is an important link between innate resistance and adaptive immunity. Mechanistically, exerts its biological effects through a receptor composed of IL12R1 and IL12R2 subunits. Binding to the receptor results in the rapid tyrosine phosphorylation of a number of cellular substrates including the JAK family kinases TYK2 and JAK2. In turn, recruited STAT4 gets phosphorylated and translocates to the nucleus where it regulates cytokine/growth factor responsive genes. As part of IL-35, plays essential roles in maintaining the immune homeostasis of the liver microenvironment and also functions as an immune-suppressive cytokine. Mediates biological events through unconventional receptors composed of IL12RB2 and gp130/IL6ST heterodimers or homodimers. Signaling requires the transcription factors STAT1 and STAT4, which form a unique heterodimer that binds to distinct DNA sites. The polypeptide is Interleukin-12 subunit alpha (IL12A) (Bos taurus (Bovine)).